Here is a 37-residue protein sequence, read N- to C-terminus: Large ribosomal subunit protein bL36 (37 aa).

Belongs to the bacterial ribosomal protein bL36 family.

This Vibrio atlanticus (strain LGP32) (Vibrio splendidus (strain Mel32)) protein is Large ribosomal subunit protein bL36.